We begin with the raw amino-acid sequence, 383 residues long: Outer membrane protein Omp-EA (383 aa).

The signal sequence occupies residues 1–21 (MKRNILAVLIPALLAAGAANA). Residues 22–30 (AEIYNKDGN) lie on the Periplasmic side of the membrane. Residues 31-45 (KLDLYGKVKAMRYLS) form a beta stranded membrane-spanning segment. Topologically, residues 46-58 (DADSNASNNADKS) are extracellular. The chain crosses the membrane as a beta stranded span at residues 59–70 (YTRIGFKGQTLI). Residues 71–74 (NDQL) are Periplasmic-facing. Residues 75–86 (TGYGQWEYNFSL) traverse the membrane as a beta stranded segment. Topologically, residues 87–100 (SNSESSSDAQSGNK) are extracellular. A beta stranded transmembrane segment spans residues 101–109 (TRLGFAGLK). The Periplasmic segment spans residues 110 to 112 (LKD). Residues 113–122 (YGSVDYGRNY) traverse the membrane as a beta stranded segment. At 123 to 155 (GVIYDVEAFTDMMPEFGATGYTRTDTYMLTRGN) the chain is on the extracellular side. The beta stranded transmembrane segment at 156-164 (SMLTWRNSD) threads the bilayer. Residues 165-171 (FFGLVDG) are Periplasmic-facing. Residues 172-178 (LKIALQY) traverse the membrane as a beta stranded segment. Residues 179 to 198 (QGKNEGSGTRATNVSNGDGY) are Extracellular-facing. Residues 199-206 (GASLSYKI) traverse the membrane as a beta stranded segment. The Periplasmic portion of the chain corresponds to 207–209 (VEG). The beta stranded transmembrane segment at 210–219 (LTINGAMSSS) threads the bilayer. Residues 220 to 243 (NRLNANSASSTTSQKMAAYGSGGR) lie on the Extracellular side of the membrane. A beta stranded membrane pass occupies residues 244–252 (AEAWATGLK). Residues 253 to 258 (YDANGV) lie on the Periplasmic side of the membrane. Residues 259–268 (YLAGTYAETR) form a beta stranded membrane-spanning segment. The Extracellular portion of the chain corresponds to 269 to 296 (NTNPFSGASYTFAGNSTATAVSGYANKV). Residues 297–307 (QNTELVAQYQF) traverse the membrane as a beta stranded segment. Residues 308–310 (DSG) lie on the Periplasmic side of the membrane. A beta stranded membrane pass occupies residues 311–319 (LRPSLAYVQ). The Extracellular segment spans residues 320-335 (TKAKDIENGIGDADLS). Residues 336–346 (KFVDVAATYYF) traverse the membrane as a beta stranded segment. The Periplasmic segment spans residues 347-351 (NKNMS). Residues 352-361 (AFVDYKVNLL) form a beta stranded membrane-spanning segment. Residues 362–372 (SDSNKLHLNTD) lie on the Extracellular side of the membrane. Residues 373-383 (DIVAVGLVYQF) form a beta stranded membrane-spanning segment.

It belongs to the Gram-negative porin family. As to quaternary structure, homotrimer.

It is found in the cell outer membrane. May play an important role in maintaining pathogenicity in plants. This chain is Outer membrane protein Omp-EA (omp-EA), found in Erwinia amylovora (Fire blight bacteria).